Consider the following 124-residue polypeptide: Fluoride-specific ion channel FluC 2 (124 aa).

The next 3 helical transmembrane spans lie at 36–56 (TFLI…YLAF), 66–86 (LFVM…SLDT), and 100–120 (LYAI…LALV). The Na(+) site is built by G74 and T77.

The protein belongs to the fluoride channel Fluc/FEX (TC 1.A.43) family.

The protein resides in the cell inner membrane. It catalyses the reaction fluoride(in) = fluoride(out). With respect to regulation, na(+) is not transported, but it plays an essential structural role and its presence is essential for fluoride channel function. Functionally, fluoride-specific ion channel. Important for reducing fluoride concentration in the cell, thus reducing its toxicity. The polypeptide is Fluoride-specific ion channel FluC 2 (Nitrobacter hamburgensis (strain DSM 10229 / NCIMB 13809 / X14)).